The chain runs to 675 residues: Protein REPRESSOR OF VERNALIZATION 1 (675 aa).

The tract at residues 1–143 (MGRRRRFTQQ…DPVKVTGKGK (143 aa)) is disordered. Over residues 22–31 (AEPPKTAKPA) the composition is skewed to low complexity. Over residues 48 to 70 (EEEDEDEEDELELEDEEDDEKDL) the composition is skewed to acidic residues. Residues 71-86 (EEMRRNEEEERREETR) are compositionally biased toward basic and acidic residues. The short motif at 73-80 (MRRNEEEE) is the Nuclear localization signal element. Over residues 87-96 (TRRRRGRKPK) the composition is skewed to basic residues. Positions 113-127 (SDEEEEEEVREEDST) are enriched in acidic residues. The region spanning 157–275 (NTFELEDPVL…TVAKKLWNLT (119 aa)) is the BAH domain. Disordered stretches follow at residues 300-349 (ELPD…KPET), 493-512 (GLTP…LQMT), and 587-675 (LASP…ADHE). Composition is skewed to basic and acidic residues over residues 333-346 (VSRD…HFVK), 499-512 (KTSE…LQMT), and 613-627 (KLEK…KPEE). The 147-residue stretch at 372–518 (YRDKWLDKLL…LQMTDARCER (147 aa)) folds into the TFIIS central domain.

As to expression, expressed constitutively.

It localises to the nucleus. In terms of biological role, component of a grass-specific mechanism of vernalization, a process by which prolonged cold exposure provides competence to flower in daylengths longer than 12 hours. Negative regulator of flowering required for vernalization establishment by repressing VRN1 before vernalization and in the fall season. In Brachypodium distachyon (Purple false brome), this protein is Protein REPRESSOR OF VERNALIZATION 1.